The following is an 87-amino-acid chain: uncharacterized protein (87 aa).

Helical transmembrane passes span I8–L28 and L47–L67.

It is found in the cell membrane. This is an uncharacterized protein from Bacillus subtilis (strain 168).